A 241-amino-acid chain; its full sequence is MADS-box transcription factor 57 (241 aa).

The MADS-box domain maps to 1 to 61; it reads MGRGKIVIRR…GRLYEFSSTN (61 aa). Positions 85–178 constitute a K-box domain; sequence IKIWQREAAS…LNVMSQQKLE (94 aa). Positions 216–241 are disordered; sequence LELSQSQQREGECSKTAAPELGLHLP.

In terms of assembly, interacts with TB1. As to expression, expressed in seedling roots and shoots. Highly expressed in young leaves.

Its subcellular location is the nucleus. Transcriptional factor that targets the CArG motif 5'-C(A/T)TTAAAAAG-3' in the promoter of D14. Directly suppresses D14 expression to control the outgrowth of axillary buds. This chain is MADS-box transcription factor 57, found in Oryza sativa subsp. japonica (Rice).